The primary structure comprises 118 residues: MATESSPLTTHVLDTASGLPAQGLCLRLSRLEAPCQQWMELRTSYTNLDGRCPGLLTPSQIKPGTYKLFFDTERYWKERGQESFYPYVEVVFTITKETQKFHVPLLLSPWSYTTYRGS.

3 residues coordinate substrate: His11, Arg51, and Tyr115.

Belongs to the transthyretin family. 5-hydroxyisourate hydrolase subfamily. As to quaternary structure, homotetramer.

It localises to the peroxisome. The catalysed reaction is 5-hydroxyisourate + H2O = 5-hydroxy-2-oxo-4-ureido-2,5-dihydro-1H-imidazole-5-carboxylate + H(+). It functions in the pathway purine metabolism; urate degradation; (S)-allantoin from urate: step 2/3. In terms of biological role, catalyzes the hydrolysis of 5-hydroxyisourate (HIU) to 2-oxo-4-hydroxy-4-carboxy-5-ureidoimidazoline (OHCU). This is 5-hydroxyisourate hydrolase (Urah) from Mus musculus (Mouse).